The primary structure comprises 674 residues: MPPPPGPAAALGTALLLLLLASESSHTVLLRAREAAQFLRPRQRRAYQVFEEAKQGHLERECVEEVCSKEEAREVFENDPETEYFYPRYQECMRKYGRPEEKNPDFAKCVQNLPDQCTPNPCDKKGTHICQDLMGNFFCVCTDGWGGRLCDKDVNECVQKNGGCSQVCHNKPGSFQCACHSGFSLASDGQTCQDIDECTDSDTCGDARCKNLPGSYSCLCDEGYTYSSKEKTCQDVDECQQDRCEQTCVNSPGSYTCHCDGRGGLKLSPDMDTCEDILPCVPFSMAKSVKSLYLGRMFSGTPVIRLRFKRLQPTRLLAEFDFRTFDPEGVLFFAGGRSDSTWIVLGLRAGRLELQLRYNGVGRITSSGPTINHGMWQTISVEELERNLVIKVNKDAVMKIAVAGELFQLERGLYHLNLTVGGIPFKESELVQPINPRLDGCMRSWNWLNGEDSAIQETVKANTKMQCFSVTERGSFFPGNGFATYRLNYTRTSLDVGTETTWEVKVVARIRPATDTGVLLALVGDDDVVPISVALVDYHSTKKLKKQLVVLAVEDVALALMEIKVCDSQEHTVTVSLREGEATLEVDGTKGQSEVSTAQLQERLDTLKTHLQGSVHTYVGGLPEVSVISAPVTAFYRGCMTLEVNGKILDLDTASYKHSDITSHSCPPVEHATP.

The N-terminal stretch at 1-27 is a signal peptide; it reads MPPPPGPAAALGTALLLLLLASESSHT. The region spanning 50–91 is the Gla domain; the sequence is FEEAKQGHLERECVEEVCSKEEAREVFENDPETEYFYPRYQE. Cys-62 and Cys-67 are oxidised to a cystine. Ser-68 is subject to Phosphoserine. In terms of domain architecture, EGF-like 1; calcium-binding spans 113-151; sequence LPDQCTPNPCDKKGTHICQDLMGNFFCVCTDGWGGRLCD. Disulfide bonds link Cys-117–Cys-130, Cys-122–Cys-139, Cys-141–Cys-150, Cys-157–Cys-168, Cys-164–Cys-177, Cys-179–Cys-192, Cys-198–Cys-209, Cys-204–Cys-218, Cys-220–Cys-233, Cys-239–Cys-248, Cys-244–Cys-257, Cys-259–Cys-274, Cys-280–Cys-566, and Cys-441–Cys-467. The EGF-like 2; calcium-binding domain occupies 153–193; the sequence is DVNECVQKNGGCSQVCHNKPGSFQCACHSGFSLASDGQTCQ. One can recognise an EGF-like 3; calcium-binding domain in the interval 194–234; that stretch reads DIDECTDSDTCGDARCKNLPGSYSCLCDEGYTYSSKEKTCQ. Positions 235–275 constitute an EGF-like 4; calcium-binding domain; it reads DVDECQQDRCEQTCVNSPGSYTCHCDGRGGLKLSPDMDTCE. 2 Laminin G-like domains span residues 295–467 and 474–666; these read GRMF…KMQC and GSFF…SHSC. Ca(2+) is bound by residues Asp-326 and Glu-328. Asn-417 carries N-linked (GlcNAc...) asparagine glycosylation. A Ca(2+)-binding site is contributed by Arg-437. The N-linked (GlcNAc...) asparagine glycan is linked to Asn-488. Thr-609 is subject to Phosphothreonine. Ser-614 is modified (phosphoserine). 2 positions are modified to phosphothreonine: Thr-617 and Thr-633. Tyr-636 is modified (phosphotyrosine). Cysteines 639 and 666 form a disulfide. Asp-652 lines the Ca(2+) pocket.

As to quaternary structure, heterodimer and heterotetramer with AXL. In terms of processing, gamma-carboxyglutamate residues are formed by vitamin K dependent carboxylation. These residues are essential for the binding of calcium.

It is found in the secreted. Ligand for tyrosine-protein kinase receptors AXL, TYRO3 and MER whose signaling is implicated in cell growth and survival, cell adhesion and cell migration. GAS6/AXL signaling plays a role in various processes such as endothelial cell survival during acidification by preventing apoptosis, optimal cytokine signaling during human natural killer cell development, hepatic regeneration, gonadotropin-releasing hormone neuron survival and migration, platelet activation, or regulation of thrombotic responses. This is Growth arrest-specific protein 6 (Gas6) from Mus musculus (Mouse).